The sequence spans 550 residues: MSTIYALSTVFGKSGVAVFRISGPDALRALELLGLDIKQPRPRFVYFARLFDEQLLIDEVLVVYFASPASFTGEDVVELHSHGSIAVLRYISEKLSTLFKPAEPGEFTRRAVLNNRMDLTKAEGIIDIINSETQEQLKQASRHLSGKLAEEYNSLRDKIIKVLSYLEAYIDFPDEEIPETVLAEIQQSIVAIQCDISRYLADGKVGEKIREGFSVVIVGKPNVGKSTLFNYLAKRDLAIVTDIPGTTRDILEVRLDCHGYPVILSDTAGIQETCDAIEKMGITRALKKATEADVIVFLRDITELHLTNVRREDVANSVIERHLDRQVAALGSREHIQIDQRHVDKLIGSSDWAQEMQLNEAGVRSKNMNYPDIEERDLNLRDILDERHEEKDRSVMCHDMMQEHDPDNGECSDDVDRRFNELFTAAKKLEIPVVKVVTKGDIAPTQLSFWQDKGYICISVYKGEGMQLLLDKIFDIISSSNIEAHIITRARHRLALENALEHLRRFNTDLPIELAAEEIKLAANHIASVTGEIKLDDVLDEIFSSFCIGK.

(6S)-5-formyl-5,6,7,8-tetrahydrofolate-binding residues include arginine 20, glutamate 78, and arginine 116. In terms of domain architecture, TrmE-type G spans 212 to 478 (GFSVVIVGKP…LLDKIFDIIS (267 aa)). Residue asparagine 222 coordinates K(+). GTP is bound by residues 222–227 (NVGKST), 241–247 (TDIPGTT), and 266–269 (DTAG). Residue serine 226 coordinates Mg(2+). K(+)-binding residues include threonine 241, isoleucine 243, and threonine 246. Threonine 247 lines the Mg(2+) pocket. Residue lysine 550 coordinates (6S)-5-formyl-5,6,7,8-tetrahydrofolate.

It belongs to the TRAFAC class TrmE-Era-EngA-EngB-Septin-like GTPase superfamily. TrmE GTPase family. Homodimer. Heterotetramer of two MnmE and two MnmG subunits. Requires K(+) as cofactor.

It is found in the cytoplasm. Functionally, exhibits a very high intrinsic GTPase hydrolysis rate. Involved in the addition of a carboxymethylaminomethyl (cmnm) group at the wobble position (U34) of certain tRNAs, forming tRNA-cmnm(5)s(2)U34. The protein is tRNA modification GTPase MnmE of Neorickettsia sennetsu (strain ATCC VR-367 / Miyayama) (Ehrlichia sennetsu).